The chain runs to 414 residues: Dihydroorotase (414 aa).

Positions 56 and 58 each coordinate Zn(2+). Substrate is bound by residues 58–60 (HFR) and Asn-90. Residues Lys-138, His-171, His-219, and Asp-280 each coordinate Zn(2+). Lys-138 bears the N6-carboxylysine mark. Residue Asp-280 is part of the active site. His-284 serves as a coordination point for substrate.

Belongs to the metallo-dependent hydrolases superfamily. DHOase family. Class I DHOase subfamily. Requires Zn(2+) as cofactor.

The catalysed reaction is (S)-dihydroorotate + H2O = N-carbamoyl-L-aspartate + H(+). Its pathway is pyrimidine metabolism; UMP biosynthesis via de novo pathway; (S)-dihydroorotate from bicarbonate: step 3/3. Functionally, catalyzes the reversible cyclization of carbamoyl aspartate to dihydroorotate. In Thermoplasma acidophilum (strain ATCC 25905 / DSM 1728 / JCM 9062 / NBRC 15155 / AMRC-C165), this protein is Dihydroorotase.